We begin with the raw amino-acid sequence, 104 residues long: Large ribosomal subunit protein uL24 (104 aa).

This sequence belongs to the universal ribosomal protein uL24 family. As to quaternary structure, part of the 50S ribosomal subunit.

In terms of biological role, one of two assembly initiator proteins, it binds directly to the 5'-end of the 23S rRNA, where it nucleates assembly of the 50S subunit. Functionally, one of the proteins that surrounds the polypeptide exit tunnel on the outside of the subunit. This Flavobacterium johnsoniae (strain ATCC 17061 / DSM 2064 / JCM 8514 / BCRC 14874 / CCUG 350202 / NBRC 14942 / NCIMB 11054 / UW101) (Cytophaga johnsonae) protein is Large ribosomal subunit protein uL24.